The sequence spans 553 residues: Methionine--tRNA ligase (553 aa).

Positions 12–22 (PYANSQLHLGH) match the 'HIGH' region motif. Zn(2+) is bound by residues Cys144, Cys147, Cys157, and Cys160. Residues 332–336 (KFSKS) carry the 'KMSKS' region motif. Residue Lys335 coordinates ATP.

It belongs to the class-I aminoacyl-tRNA synthetase family. MetG type 1 subfamily. In terms of assembly, monomer. The cofactor is Zn(2+).

It localises to the cytoplasm. It carries out the reaction tRNA(Met) + L-methionine + ATP = L-methionyl-tRNA(Met) + AMP + diphosphate. Is required not only for elongation of protein synthesis but also for the initiation of all mRNA translation through initiator tRNA(fMet) aminoacylation. The sequence is that of Methionine--tRNA ligase from Dehalococcoides mccartyi (strain ATCC BAA-2100 / JCM 16839 / KCTC 5957 / BAV1).